Consider the following 1490-residue polypeptide: MIFSQGSSPLKGDFSKIKFSIASPESILAHSRGEVLKPETINYRTFKPERDGLMCEKIFGPTKDWECYCGKYKRVRYKGIICDRCGVEVTTKSVRRERMGHISLAVPVVHTWFFRSVPSKIGALLDLSTKELERIIYYEVYVVINPGEPGEKQGIKKFDRLTEEQYFQIITEYEDNQDLEDNDPAKFVAKMGGEAIHMLLKGLNLDEIALNLRKVLKESGSEQKRADALKRLKVVEAFRKSYEPQKRTRKKSTGLFPEEDSPELYIYEGNKPEYMVMEVVPVIPPELRPLVPLEGGRFATSDLNDLYRRVIIRNNRLKKLIDIRAPEVILRNEKRMLQEAVDALFDNSRKANAVKTGESNRPLKSLSDALKGKQGRFRQNLLGKRVDYSGRSVIVVGPELKLHQCGLPKSMAIELFQPFVIRRLVERGIAKSVKSAKKLIDKKDPVVWDVLEKVIDGHPVLLNRAPTLHRLGIQAFQPTLIEGKAIQLHPLVCTAFNADFDGDQMAVHVPLSPEAQLEASLLMLSSHNLILPQSGKPVTVPSQDMVLGMYYLTKARFGDVGQGQLFYSMEEVIIAYNEERVGLHAQIFVKYDGKVDQVSDPVRLVDTLVPEEQAERRAWLKSQIEQKKLLVTTVGRVIFNQHMPEEIGFINKLINKKVAKELIAQLSSEVGNVETARFLDNIKEVGFDYAMRGGLSIGLSDAIVPETKVKHIKNAQRDSAKIIKEYNRGTLTDNERYNQIVDVWQKTSNLVADESYEKLKKDRDGFNPLYMMLDSGARGSREQVRQLTGMRGLIARPQKSMSGQPGEIIENPIISNLKEGLTVLEYFISTHGARKGLSDTSLKTADAGYLTRRLHDVAQDVIVTIDDCGTTRGLHVERNIEEETSGQIKFREKIKGRVAARDIVDVINDKVVVKAGEIITDELAAAIQDNIGVEEAEIRSVLTCESKVGICAKCYGTNLSVHKLVEIGEAVGVIAAQSIGEPGTQLTLRTFHQGGAAQGGIAETETKAFYEGQVELEDVKSVEHSIITEDGIEETRQIVIQKNGKLNIIDPDSGKVLKRYVVPHGAHLNVEHGQMVRKEQVLFSSEPNSTQIIAEMPGFAKFIDIEKGVTYKEEVDPQTGFAQHTIINWRSKLRASETREPRVAIVSESGEIRKTYPVPIKSNLYVEDGQKIVPGDIIAKVPRNLDRVGGDITAGLPKVTELFEARIPTDPAIVSEIDGYVSFGSQRRSSKEIRVKNDFGEEKVYYVQVGKHVLATEGDEVKAGDPLTDGAVSPQDILRIQGPNAVQQYLVNEIQKVYQINAGVEINDKHLEVIVRQMLQKVRVEEPGDTDLLPGDLIDRSTFIEANEAVAEKVRVIDRGDAPARIIEGQLYKQRDITKLNRELRRNGKSLITIEPALQATSHPVLLGITSAALQTESVISAASFQETTKVLTDAAVAGKVDHLVGLKENVIVGKLIPAGTGLRKYRSIRLRDNEAEEAEAVEAASDEEI.

Cys-67, Cys-69, Cys-82, and Cys-85 together coordinate Zn(2+). Residues Asp-499, Asp-501, and Asp-503 each contribute to the Mg(2+) site. 4 residues coordinate Zn(2+): Cys-868, Cys-944, Cys-951, and Cys-954.

The protein belongs to the RNA polymerase beta' chain family. The RNAP catalytic core consists of 2 alpha, 1 beta, 1 beta' and 1 omega subunit. When a sigma factor is associated with the core the holoenzyme is formed, which can initiate transcription. Mg(2+) serves as cofactor. The cofactor is Zn(2+).

The enzyme catalyses RNA(n) + a ribonucleoside 5'-triphosphate = RNA(n+1) + diphosphate. DNA-dependent RNA polymerase catalyzes the transcription of DNA into RNA using the four ribonucleoside triphosphates as substrates. In Chlorobaculum tepidum (strain ATCC 49652 / DSM 12025 / NBRC 103806 / TLS) (Chlorobium tepidum), this protein is DNA-directed RNA polymerase subunit beta'.